Here is a 1410-residue protein sequence, read N- to C-terminus: DNA-directed RNA polymerase subunit beta' (1410 aa).

Zn(2+) contacts are provided by cysteine 70, cysteine 72, cysteine 85, and cysteine 88. 3 residues coordinate Mg(2+): aspartate 460, aspartate 462, and aspartate 464. Residues cysteine 814, cysteine 888, cysteine 895, and cysteine 898 each contribute to the Zn(2+) site.

This sequence belongs to the RNA polymerase beta' chain family. In terms of assembly, the RNAP catalytic core consists of 2 alpha, 1 beta, 1 beta' and 1 omega subunit. When a sigma factor is associated with the core the holoenzyme is formed, which can initiate transcription. Requires Mg(2+) as cofactor. Zn(2+) serves as cofactor.

The enzyme catalyses RNA(n) + a ribonucleoside 5'-triphosphate = RNA(n+1) + diphosphate. Functionally, DNA-dependent RNA polymerase catalyzes the transcription of DNA into RNA using the four ribonucleoside triphosphates as substrates. In Shewanella denitrificans (strain OS217 / ATCC BAA-1090 / DSM 15013), this protein is DNA-directed RNA polymerase subunit beta'.